Consider the following 1161-residue polypeptide: Hamartin (1161 aa).

Lys-30 participates in a covalent cross-link: Glycyl lysine isopeptide (Lys-Gly) (interchain with G-Cter in ubiquitin). Disordered stretches follow at residues 296–336 (PYVD…PSTR) and 353–591 (CGMT…QRGV). Residues 303–336 (SYGGSTSTPSSSSRLMLFSPPGQLPQSLSSPSTR) are compositionally biased toward low complexity. Residues 393–402 (TSPPPAPPCP) are compositionally biased toward pro residues. The tract at residues 403–784 (QDDCVHGSAA…QIRQLQHDRE (382 aa)) is mediates interaction with WDR45B. The segment covering 471-484 (EKDKEEAAISKELS) has biased composition (basic and acidic residues). A phosphoserine mark is found at Ser-484, Ser-502, Ser-508, Ser-518, Ser-592, and Ser-595. Polar residues predominate over residues 509–529 (LSGSQRKTHSAASGTQGSSVN). Coiled-coil stretches lie at residues 721–849 (IRAA…NRQL), 879–917 (TAYR…AKKD), and 967–991 (EKDG…ERLD). Disordered stretches follow at residues 1003-1077 (GHNE…SLPS) and 1092-1161 (NKSE…PEHS). A compositionally biased stretch (basic and acidic residues) spans 1004-1017 (HNEEASGHNGETRT). Residues 1026-1043 (SCGGRVTGGSSSSSSELS) show a composition bias toward low complexity. Residues 1064-1077 (PSSSIPTTVGSLPS) show a composition bias toward polar residues. Ser-1094 carries the phosphoserine modification. Low complexity predominate over residues 1103–1113 (VTMSSSSLSET). Basic and acidic residues-rich tracts occupy residues 1114-1124 (LKTELGKDSGT) and 1152-1161 (DYNETHPEHS).

In terms of assembly, component of the TSC-TBC complex (also named Rhebulator complex), composed of 2 molecules of TSC1, 2 molecules of TSC2 and 1 molecule of TBC1D7. Probably forms a complex composed of chaperones HSP90 and HSP70, co-chaperones STIP1/HOP, CDC37, PPP5C, PTGES3/p23, TSC1 and client protein TSC2. Forms a complex composed of chaperones HSP90 and HSP70, co-chaperones CDC37, PPP5C, TSC1 and client protein TSC2, CDK4, AKT, RAF1 and NR3C1; this complex does not contain co-chaperones STIP1/HOP and PTGES3/p23. Forms a complex containing HSP90AA1, TSC1 and TSC2; TSC1 is required to recruit TCS2 to the complex. Interacts (via C-terminus) with the closed form of HSP90AA1 (via the middle domain and TPR repeat-binding motif). Interacts with DOCK7. Interacts with FBXW5. Interacts with WDR45B. Interacts with RPAP3 and URI1. Phosphorylation at Ser-502 does not affect interaction with TSC2. In terms of processing, 'Lys-63'-linked ubiquitinated at Lys-30 by PELI1; the ubiquitination promotes TSC1/TSC2 complex stability.

Its subcellular location is the lysosome membrane. The protein localises to the cytoplasm. It is found in the cytosol. Its function is as follows. Non-catalytic component of the TSC-TBC complex, a multiprotein complex that acts as a negative regulator of the canonical mTORC1 complex, an evolutionarily conserved central nutrient sensor that stimulates anabolic reactions and macromolecule biosynthesis to promote cellular biomass generation and growth. The TSC-TBC complex acts as a GTPase-activating protein (GAP) for the small GTPase RHEB, a direct activator of the protein kinase activity of mTORC1. In absence of nutrients, the TSC-TBC complex inhibits mTORC1, thereby preventing phosphorylation of ribosomal protein S6 kinase (RPS6KB1 and RPS6KB2) and EIF4EBP1 (4E-BP1) by the mTORC1 signaling. The TSC-TBC complex is inactivated in response to nutrients, relieving inhibition of mTORC1. Within the TSC-TBC complex, TSC1 stabilizes TSC2 and prevents TSC2 self-aggregation. Involved in microtubule-mediated protein transport via its ability to regulate mTORC1 signaling. Also acts as a co-chaperone for HSP90AA1 facilitating HSP90AA1 chaperoning of protein clients such as kinases, TSC2 and glucocorticoid receptor NR3C1. Increases ATP binding to HSP90AA1 and inhibits HSP90AA1 ATPase activity. Competes with the activating co-chaperone AHSA1 for binding to HSP90AA1, thereby providing a reciprocal regulatory mechanism for chaperoning of client proteins. Recruits TSC2 to HSP90AA1 and stabilizes TSC2 by preventing the interaction between TSC2 and ubiquitin ligase HERC1. The polypeptide is Hamartin (Mus musculus (Mouse)).